The following is a 257-amino-acid chain: Zinc finger protein 8 (257 aa).

Disordered regions lie at residues 48-92 (GDNS…NNNN), 108-128 (QALG…KRGS), and 214-238 (GVYS…PNNW). Residues 50-65 (NSDNLSAEPSDHQTTT) show a composition bias toward polar residues. Over residues 66 to 92 (KNDESSENIKDKDKEKDKDKDKDNNNN) the composition is skewed to basic and acidic residues. A C2H2-type zinc finger spans residues 95–117 (FECHYCFRNFPTSQALGGHQNAH). The span at 115 to 126 (NAHKRERQHAKR) shows a compositional bias: basic residues.

Expressed in developing cauline leaves.

It localises to the nucleus. Probable transcription factor required for the initiation of inflorescence trichomes in response to gibberellin and cytokinin. Is not involved in the regulation of trichome branching. Is functionally equivalent to GIS2. Acts as a negative regulator of abscisic acid (ABA) signaling during germination and early seedling development. The protein is Zinc finger protein 8 of Arabidopsis thaliana (Mouse-ear cress).